Here is a 126-residue protein sequence, read N- to C-terminus: Aspartate 1-decarboxylase (126 aa).

The active-site Schiff-base intermediate with substrate; via pyruvic acid is Ser-25. Ser-25 is modified (pyruvic acid (Ser)). Thr-57 contacts substrate. Tyr-58 acts as the Proton donor in catalysis. A substrate-binding site is contributed by 73–75 (GAA).

This sequence belongs to the PanD family. Heterooctamer of four alpha and four beta subunits. It depends on pyruvate as a cofactor. In terms of processing, is synthesized initially as an inactive proenzyme, which is activated by self-cleavage at a specific serine bond to produce a beta-subunit with a hydroxyl group at its C-terminus and an alpha-subunit with a pyruvoyl group at its N-terminus.

It localises to the cytoplasm. The catalysed reaction is L-aspartate + H(+) = beta-alanine + CO2. The protein operates within cofactor biosynthesis; (R)-pantothenate biosynthesis; beta-alanine from L-aspartate: step 1/1. Catalyzes the pyruvoyl-dependent decarboxylation of aspartate to produce beta-alanine. This chain is Aspartate 1-decarboxylase, found in Escherichia coli O6:H1 (strain CFT073 / ATCC 700928 / UPEC).